The sequence spans 297 residues: 4-hydroxy-tetrahydrodipicolinate synthase (297 aa).

Thr-47 is a binding site for pyruvate. The Proton donor/acceptor role is filled by Tyr-136. The active-site Schiff-base intermediate with substrate is Lys-165. Position 206 (Ile-206) interacts with pyruvate.

Belongs to the DapA family. Homotetramer; dimer of dimers.

It localises to the cytoplasm. The enzyme catalyses L-aspartate 4-semialdehyde + pyruvate = (2S,4S)-4-hydroxy-2,3,4,5-tetrahydrodipicolinate + H2O + H(+). The protein operates within amino-acid biosynthesis; L-lysine biosynthesis via DAP pathway; (S)-tetrahydrodipicolinate from L-aspartate: step 3/4. Its function is as follows. Catalyzes the condensation of (S)-aspartate-beta-semialdehyde [(S)-ASA] and pyruvate to 4-hydroxy-tetrahydrodipicolinate (HTPA). The protein is 4-hydroxy-tetrahydrodipicolinate synthase of Campylobacter curvus (strain 525.92).